The chain runs to 563 residues: Arginine--tRNA ligase (563 aa).

Positions 121 to 131 (PNIAKPFSIGH) match the 'HIGH' region motif.

Belongs to the class-I aminoacyl-tRNA synthetase family. As to quaternary structure, monomer.

The protein resides in the cytoplasm. It catalyses the reaction tRNA(Arg) + L-arginine + ATP = L-arginyl-tRNA(Arg) + AMP + diphosphate. In Streptococcus pyogenes serotype M4 (strain MGAS10750), this protein is Arginine--tRNA ligase.